A 616-amino-acid chain; its full sequence is Elongation factor 4 (616 aa).

Positions 14–195 constitute a tr-type G domain; the sequence is SRIRNFCIIA…EVIRQVPPPV (182 aa). GTP is bound by residues 26–31 and 142–145; these read DHGKST and NKID.

Belongs to the TRAFAC class translation factor GTPase superfamily. Classic translation factor GTPase family. LepA subfamily.

It localises to the cell membrane. The enzyme catalyses GTP + H2O = GDP + phosphate + H(+). Its function is as follows. Required for accurate and efficient protein synthesis under certain stress conditions. May act as a fidelity factor of the translation reaction, by catalyzing a one-codon backward translocation of tRNAs on improperly translocated ribosomes. Back-translocation proceeds from a post-translocation (POST) complex to a pre-translocation (PRE) complex, thus giving elongation factor G a second chance to translocate the tRNAs correctly. Binds to ribosomes in a GTP-dependent manner. This chain is Elongation factor 4, found in Nocardia farcinica (strain IFM 10152).